Reading from the N-terminus, the 267-residue chain is Thiamine pyrophosphokinase 2 (267 aa).

This sequence belongs to the thiamine pyrophosphokinase family.

The protein resides in the cytoplasm. Its subcellular location is the cytosol. It carries out the reaction thiamine + ATP = thiamine diphosphate + AMP + H(+). It functions in the pathway cofactor biosynthesis; thiamine diphosphate biosynthesis; thiamine diphosphate from thiamine: step 1/1. In terms of biological role, catalyzes the phosphorylation of thiamine to thiamine pyrophosphate (TPP). TPP is an active cofactor for enzymes involved in glycolysis and energy production. Plant leaves require high levels of TPP for photosynthesis and carbohydrate metabolism. This Oryza sativa subsp. japonica (Rice) protein is Thiamine pyrophosphokinase 2 (TPK2).